Here is a 40-residue protein sequence, read N- to C-terminus: Subtilisin-like serine protease AS-E1 (40 aa).

One can recognise a Peptidase S8 domain in the interval 4-40 (PWGLARISHRTTGATSYVYDDSAGEGTCSYIIDTGIY). Aspartate 36 functions as the Charge relay system in the catalytic mechanism.

This sequence belongs to the peptidase S8 family. Homodimer.

With respect to regulation, strongly inhibited by antipain and PMSF. Inhibited by benzamidine and aprotinin by 80% and 17% respectively. Little or no inhibition by EDTA, E-64, iodoacetic acid, leupeptin and FUT-175. In terms of biological role, subtilisin-like serine protease. Cleaves prothrombin at 155-Arg-|-Ser-156, 45-Thr-|-Ala-46 and 316-Tyr-|-Ile-317 to produce meizothrombin(desF1)-like molecules. Degrades fibrinogen. Inhibits plasma coagulation. In Acremonium sp, this protein is Subtilisin-like serine protease AS-E1.